Consider the following 576-residue polypeptide: Colicin-E7 (576 aa).

Disordered regions lie at residues 1–75 (MSGG…GGGS), 421–478 (SSAL…PVPD), and 506–557 (DPEL…GVYD). The segment covering 19 to 35 (NINGGPTGLGGNGGASD) has biased composition (gly residues). Over residues 36-45 (GSGWSSENNP) the composition is skewed to low complexity. A compositionally biased stretch (gly residues) spans 46-75 (WGGGSGSGVHWGGGSGHGNGGGNSNSGGGS). Basic and acidic residues-rich tracts occupy residues 424–447 (LERRKQKENKEKDAKAKLDKESKR) and 535–548 (SGKRTSFELHHEKP). Zn(2+) is bound by residues H544, H569, and H573.

This sequence belongs to the colicin/pyosin nuclease family.

This plasmid-coded bactericidal protein is an endonuclease active on both single- and double-stranded DNA but with undefined specificity. Functionally, colicins are polypeptide toxins produced by and active against E.coli and closely related bacteria. The sequence is that of Colicin-E7 (colE7) from Escherichia coli.